The following is a 329-amino-acid chain: Phenylalanine--tRNA ligase alpha subunit (329 aa).

This sequence belongs to the class-II aminoacyl-tRNA synthetase family. Phe-tRNA synthetase alpha subunit type 1 subfamily. Tetramer of two alpha and two beta subunits. The cofactor is Mg(2+).

The protein resides in the cytoplasm. The enzyme catalyses tRNA(Phe) + L-phenylalanine + ATP = L-phenylalanyl-tRNA(Phe) + AMP + diphosphate + H(+). The chain is Phenylalanine--tRNA ligase alpha subunit (pheS) from Buchnera aphidicola subsp. Schizaphis graminum (strain Sg).